Reading from the N-terminus, the 420-residue chain is Structure-specific endonuclease subunit SLX1 homolog (420 aa).

In terms of domain architecture, GIY-YIG spans 19-106; that stretch reads SSDNTYPWQN…QHPLKSRRLR (88 aa). Disordered regions lie at residues 237–306 and 311–330; these read SVEE…AAVN and DDSADDGTTDGNEDGPDDVA. A compositionally biased stretch (low complexity) spans 247 to 266; sequence PSSCSVPPSTGSSAAPTPGA. Residues 279 to 301 are compositionally biased toward basic and acidic residues; sequence VDPRLDSDDRDDNHQFESPDNHE. Positions 311–327 are enriched in acidic residues; sequence DDSADDGTTDGNEDGPD. The SLX1-type zinc finger occupies 348 to 405; the sequence is CGHCHQSVYQELCIVCLNATCTYRAHLLCAAQAAVHPLGQSSPSETRLVPLRHSCPRC.

The protein belongs to the SLX1 family. In terms of assembly, forms a heterodimer with a member of the SLX4 family. A divalent metal cation is required as a cofactor.

It localises to the nucleus. In terms of biological role, catalytic subunit of a heterodimeric structure-specific endonuclease that resolves DNA secondary structures generated during DNA repair and recombination. Has endonuclease activity towards branched DNA substrates, introducing single-strand cuts in duplex DNA close to junctions with ss-DNA. The polypeptide is Structure-specific endonuclease subunit SLX1 homolog (Monosiga brevicollis (Choanoflagellate)).